Reading from the N-terminus, the 1356-residue chain is Partitioning defective 3 homolog (1356 aa).

Serine 25 carries the phosphoserine modification. Disordered regions lie at residues 81–100 (EQDP…GTQS) and 154–262 (SVSD…GLEH). Phosphothreonine is present on threonine 91. Residues 91-100 (TSASSTGTQS) show a composition bias toward low complexity. Composition is skewed to polar residues over residues 154–163 (SVSDSNFSSE) and 171–187 (TRWS…TAGS). Phosphoserine is present on residues serine 156 and serine 174. Residues 190–203 (TCDRKKDENYRSLP) show a composition bias toward basic and acidic residues. Positions 204–224 (RDTSNWSNQFQRDNARSSLSA) are enriched in polar residues. Residues 246–260 (DNSRVEPVGHADTGL) show a composition bias toward basic and acidic residues. In terms of domain architecture, PDZ 1 spans 271–359 (MVKLVEVPND…TPIIWFHVVP (89 aa)). Serine 383 is modified (phosphoserine). The segment at 408–448 (LNHPPEQIDSHSRLPHSAHPSGKPPSAPASAPQNVFSTTVS) is disordered. PDZ domains are found at residues 461–546 (NIQL…LVFR) and 590–677 (EVPL…GMIQ). Tyrosine 489 carries the phosphotyrosine modification. Phosphoserine occurs at positions 692, 695, 715, 728, 792, 809, and 827. The interval 712–936 (RRISHSLYSG…AAIDKSYDKP (225 aa)) is interaction with PRKCI and PRKCZ. N6-acetyllysine is present on lysine 834. Serine 837 carries the phosphoserine modification. The residue at position 851 (lysine 851) is an N6-acetyllysine. Residues serine 852 and serine 873 each carry the phosphoserine modification. 2 disordered regions span residues 865-886 (TVDD…GLKK) and 932-1025 (SYDK…DMFR). N6-acetyllysine is present on lysine 885. An interaction with FRMD4A region spans residues 935–1356 (KPAVDDDDEG…TPEKGRPFYS (422 aa)). The segment covering 939–953 (DDDDEGMETLEEDTE) has biased composition (acidic residues). Serine 962 is subject to Phosphoserine; by AURKA. Positions 968-982 (DQPSHSLERQMNGNQ) are enriched in polar residues. 2 positions are modified to phosphoserine: serine 971 and serine 973. Over residues 983–1009 (EKGDKTDRKKDKTGKEKKKDRDKEKDK) the composition is skewed to basic and acidic residues. The residue at position 1046 (serine 1046) is a Phosphoserine. Positions 1049-1077 (SEEERIRMKQEQERIQAKTREFRERQARE) form a coiled coil. Positions 1129-1356 (QVKKPRNSKP…TPEKGRPFYS (228 aa)) are disordered. Residues 1136-1149 (SKPSPVDSNRSTPS) are compositionally biased toward polar residues. Positions 1150–1177 (NHDRIQRLRQEFQQAKQDEDVEDRRRTY) are enriched in basic and acidic residues. 3 coiled-coil regions span residues 1151 to 1174 (HDRI…EDRR), 1201 to 1224 (VQMQ…YSSL), and 1280 to 1301 (MLET…MKKQ). Low complexity predominate over residues 1196 to 1205 (SVSVEVQMQR). A compositionally biased stretch (polar residues) spans 1221-1245 (YSSLPRQSRKNASSVSQDSWEQNYS). Basic and acidic residues predominate over residues 1285–1298 (ELLRQEQRRKEQQM). Polar residues predominate over residues 1337–1346 (SQVARLNRLQ). Basic and acidic residues predominate over residues 1347–1356 (TPEKGRPFYS). Position 1350 is an N6-acetyllysine (lysine 1350).

This sequence belongs to the PAR3 family. As to quaternary structure, interacts (via PDZ 1 domain) with F11R/JAM1, PARD6A and PARD6B. Interacts with PRCKI and CDH5. Interacts (via PDZ 3 domain) with PTEN (via C-terminus). Part of a complex with PARD6A or PARD6B, PRKCI or PRKCZ and CDC42 or RAC1. Component of a complex whose core is composed of ARHGAP17, AMOT, PALS1, PATJ and PARD3/PAR3. Interacts with LIMK2, AURKA and AURKB. Component of the Par polarity complex, composed of at least phosphorylated PRKCZ, PARD3 and TIAM1. Directly interacts with TIAM1 and TIAM2. Interacts with ECT2, FBF1 and SIRT2. Interacts (via coiled-coil domain) with FRMD4A. Found in a complex with PARD3, CYTH1 and FRMD4A. Interacts with SAPCD2. Interacts with PRKCA. In terms of assembly, interacts with PRKCZ. In terms of processing, acetylated. Deacetylated by SIRT2, thereby inhibiting Schwann cell peripheral myelination. Post-translationally, phosphorylation at Ser-827 by PRKCZ and PRKCI occurs at the most apical tip of epithelial cell-cell contacts during the initial phase of tight junction formation and may promote dissociation of the complex with PARD6. EGF-induced Tyr-1127 phosphorylation mediates dissociation from LIMK2. Phosphorylation by AURKA at Ser-962 is required for the normal establishment of neuronal polarity. Widely expressed.

It is found in the cytoplasm. The protein resides in the endomembrane system. The protein localises to the cell junction. It localises to the tight junction. Its subcellular location is the adherens junction. It is found in the cell membrane. The protein resides in the cell cortex. The protein localises to the cytoskeleton. In terms of biological role, adapter protein involved in asymmetrical cell division and cell polarization processes. Seems to play a central role in the formation of epithelial tight junctions. Targets the phosphatase PTEN to cell junctions. Involved in Schwann cell peripheral myelination. Association with PARD6B may prevent the interaction of PARD3 with F11R/JAM1, thereby preventing tight junction assembly. The PARD6-PARD3 complex links GTP-bound Rho small GTPases to atypical protein kinase C proteins. Required for establishment of neuronal polarity and normal axon formation in cultured hippocampal neurons. This is Partitioning defective 3 homolog from Homo sapiens (Human).